A 143-amino-acid chain; its full sequence is Large ribosomal subunit protein uL13 (143 aa).

Belongs to the universal ribosomal protein uL13 family. As to quaternary structure, part of the 50S ribosomal subunit.

This protein is one of the early assembly proteins of the 50S ribosomal subunit, although it is not seen to bind rRNA by itself. It is important during the early stages of 50S assembly. The protein is Large ribosomal subunit protein uL13 of Neisseria meningitidis serogroup C (strain 053442).